Reading from the N-terminus, the 396-residue chain is Probable sugar efflux transporter (396 aa).

12 helical membrane-spanning segments follow: residues 15–35, 50–70, 81–101, 103–123, 136–156, 169–189, 209–229, 246–266, 275–295, 301–321, 333–353, and 364–384; these read VVTL…PVGL, VGIM…PFML, LICL…AWNF, VLVI…SITA, AQAL…GLPI, TFFA…KLLP, PALM…YTAY, FATV…LVFG, SLVS…LPAA, LAIL…GMQV, VAMA…ALVG, and AIGY…VLIF.

It belongs to the major facilitator superfamily. SotB (TC 2.A.1.2) family.

The protein resides in the cell inner membrane. Involved in the efflux of sugars. The physiological role may be the reduction of the intracellular concentration of toxic sugars or sugar metabolites. This chain is Probable sugar efflux transporter, found in Salmonella schwarzengrund (strain CVM19633).